Consider the following 379-residue polypeptide: Succinyl-diaminopimelate desuccinylase (379 aa).

Position 70 (histidine 70) interacts with Zn(2+). Aspartate 72 is an active-site residue. Aspartate 103 lines the Zn(2+) pocket. Catalysis depends on glutamate 137, which acts as the Proton acceptor. Zn(2+) is bound by residues glutamate 138, glutamate 166, and histidine 352.

Belongs to the peptidase M20A family. DapE subfamily. As to quaternary structure, homodimer. Zn(2+) is required as a cofactor. Requires Co(2+) as cofactor.

The catalysed reaction is N-succinyl-(2S,6S)-2,6-diaminopimelate + H2O = (2S,6S)-2,6-diaminopimelate + succinate. The protein operates within amino-acid biosynthesis; L-lysine biosynthesis via DAP pathway; LL-2,6-diaminopimelate from (S)-tetrahydrodipicolinate (succinylase route): step 3/3. Its function is as follows. Catalyzes the hydrolysis of N-succinyl-L,L-diaminopimelic acid (SDAP), forming succinate and LL-2,6-diaminopimelate (DAP), an intermediate involved in the bacterial biosynthesis of lysine and meso-diaminopimelic acid, an essential component of bacterial cell walls. The sequence is that of Succinyl-diaminopimelate desuccinylase from Shewanella baltica (strain OS223).